A 246-amino-acid polypeptide reads, in one-letter code: 2-aminoethylphosphonate cytidylyltransferase (246 aa).

Ala-19, Gly-20, Lys-34, Ser-97, Glu-114, and Ala-115 together coordinate CMP-(2-aminoethyl)phosphonate. The Mg(2+) site is built by Asp-116 and Asp-145. Positions 145, 161, and 202 each coordinate CMP-(2-aminoethyl)phosphonate. 2 residues coordinate Mg(2+): Glu-226 and Asp-228.

This sequence belongs to the LicC/PntC cytidylyltransferase family. Monomer. It depends on Mg(2+) as a cofactor.

It catalyses the reaction (2-aminoethyl)phosphonate + CTP = CMP-(2-aminoethyl)phosphonate + diphosphate. It participates in phosphorus metabolism; phosphonate biosynthesis. Its function is as follows. Cytidylyltransferase involved in the biosynthesis of cell-surface phosphonates. Catalyzes the activation of 2-aminoethylphosphonate (AEP) to CMP-2-aminoethylphosphonate (CMP-AEP). Can also use phosphocholine, with much lower efficiency. Exhibits strong activity towards CTP, limited activity towards ATP and no activity with GTP. The polypeptide is 2-aminoethylphosphonate cytidylyltransferase (Lancefieldella rimae (strain ATCC 49626 / DSM 7090 / CCUG 31168 / NBRC 15546 / VPI D140H-11A) (Atopobium rimae)).